The sequence spans 112 residues: Large ribosomal subunit protein uL22 (112 aa).

This sequence belongs to the universal ribosomal protein uL22 family. Part of the 50S ribosomal subunit.

In terms of biological role, this protein binds specifically to 23S rRNA; its binding is stimulated by other ribosomal proteins, e.g. L4, L17, and L20. It is important during the early stages of 50S assembly. It makes multiple contacts with different domains of the 23S rRNA in the assembled 50S subunit and ribosome. Functionally, the globular domain of the protein is located near the polypeptide exit tunnel on the outside of the subunit, while an extended beta-hairpin is found that lines the wall of the exit tunnel in the center of the 70S ribosome. The protein is Large ribosomal subunit protein uL22 of Nitratidesulfovibrio vulgaris (strain ATCC 29579 / DSM 644 / CCUG 34227 / NCIMB 8303 / VKM B-1760 / Hildenborough) (Desulfovibrio vulgaris).